Consider the following 722-residue polypeptide: Putative tyrosine-protein kinase in cps region (722 aa).

2 consecutive transmembrane segments (helical) span residues 31–53 and 427–449; these read IIIA…ATPI and IVVL…VRIL.

It belongs to the etk/wzc family. Post-translationally, autophosphorylated on tyrosine residue(s).

The protein resides in the cell inner membrane. The enzyme catalyses L-tyrosyl-[protein] + ATP = O-phospho-L-tyrosyl-[protein] + ADP + H(+). It participates in glycan metabolism; exopolysaccharide biosynthesis. The chain is Putative tyrosine-protein kinase in cps region from Klebsiella pneumoniae.